Consider the following 277-residue polypeptide: RsbT co-antagonist protein RsbRB (277 aa).

The region spanning 165–276 (SSPVITLSKS…TNLAQALNYH (112 aa)) is the STAS domain. Thr186 bears the Phosphothreonine mark.

Interacts with RsbRA and RsbS in the stressosome. The stressosome probably also contains RsbRC and RsbRD. Post-translationally, phosphorylated by RsbT.

Functionally, one of 4 functionally non-identical RsbR paralogs, it functions in the environmental signaling branch of the general stress response. Its function is as follows. Negative regulator of sigma-B activity. Non-phosphorylated RsbS binds to RsbT, preventing its association with RsbU. Requires any one of RsbRA, RsbRB, RsbRC or RsbRD to sequester RsbT. When RsbS and the RsbR paralog(s) are phosphorylated, they release RsbT, which can then bind and activate RsbU. This chain is RsbT co-antagonist protein RsbRB (rsbRB), found in Bacillus subtilis (strain 168).